The following is a 743-amino-acid chain: 1,4-alpha-glucan branching enzyme GlgB (743 aa).

The active-site Nucleophile is the Asp416. Glu469 (proton donor) is an active-site residue.

This sequence belongs to the glycosyl hydrolase 13 family. GlgB subfamily. In terms of assembly, monomer.

The catalysed reaction is Transfers a segment of a (1-&gt;4)-alpha-D-glucan chain to a primary hydroxy group in a similar glucan chain.. It participates in glycan biosynthesis; glycogen biosynthesis. Its function is as follows. Catalyzes the formation of the alpha-1,6-glucosidic linkages in glycogen by scission of a 1,4-alpha-linked oligosaccharide from growing alpha-1,4-glucan chains and the subsequent attachment of the oligosaccharide to the alpha-1,6 position. The protein is 1,4-alpha-glucan branching enzyme GlgB of Shewanella baltica (strain OS223).